An 81-amino-acid chain; its full sequence is Cytochrome c oxidase subunit 7B2, mitochondrial (81 aa).

The transit peptide at 1–25 directs the protein to the mitochondrion; the sequence is MMFPLARNALSSLKIRSILQSMARQ. At 26 to 33 the chain is on the mitochondrial matrix side; it reads SHVKHSPD. Residues 34–60 form a helical membrane-spanning segment; it reads FHDKYGNAVLASGTAFCVVAWVFTATQ. Over 61 to 81 the chain is Mitochondrial intermembrane; it reads IGIEWNLSPVGRVTPKEWKHQ.

Belongs to the cytochrome c oxidase VIIb family. As to quaternary structure, component of the cytochrome c oxidase (complex IV, CIV), a multisubunit enzyme composed of 14 subunits. The complex is composed of a catalytic core of 3 subunits MT-CO1, MT-CO2 and MT-CO3, encoded in the mitochondrial DNA, and 11 supernumerary subunits COX4I, COX5A, COX5B, COX6A, COX6B, COX6C, COX7A, COX7B, COX7C, COX8 and NDUFA4, which are encoded in the nuclear genome. The complex exists as a monomer or a dimer and forms supercomplexes (SCs) in the inner mitochondrial membrane with NADH-ubiquinone oxidoreductase (complex I, CI) and ubiquinol-cytochrome c oxidoreductase (cytochrome b-c1 complex, complex III, CIII), resulting in different assemblies (supercomplex SCI(1)III(2)IV(1) and megacomplex MCI(2)III(2)IV(2)).

Its subcellular location is the mitochondrion inner membrane. The protein operates within energy metabolism; oxidative phosphorylation. Component of the cytochrome c oxidase, the last enzyme in the mitochondrial electron transport chain which drives oxidative phosphorylation. The respiratory chain contains 3 multisubunit complexes succinate dehydrogenase (complex II, CII), ubiquinol-cytochrome c oxidoreductase (cytochrome b-c1 complex, complex III, CIII) and cytochrome c oxidase (complex IV, CIV), that cooperate to transfer electrons derived from NADH and succinate to molecular oxygen, creating an electrochemical gradient over the inner membrane that drives transmembrane transport and the ATP synthase. Cytochrome c oxidase is the component of the respiratory chain that catalyzes the reduction of oxygen to water. Electrons originating from reduced cytochrome c in the intermembrane space (IMS) are transferred via the dinuclear copper A center (CU(A)) of subunit 2 and heme A of subunit 1 to the active site in subunit 1, a binuclear center (BNC) formed by heme A3 and copper B (CU(B)). The BNC reduces molecular oxygen to 2 water molecules using 4 electrons from cytochrome c in the IMS and 4 protons from the mitochondrial matrix. This chain is Cytochrome c oxidase subunit 7B2, mitochondrial (COX7B2), found in Macaca fascicularis (Crab-eating macaque).